The following is a 226-amino-acid chain: Small ribosomal subunit protein uS3 (226 aa).

One can recognise a KH type-2 domain in the interval 39 to 107; it reads VRNFIRKKLA…PVHINIEEIR (69 aa).

The protein belongs to the universal ribosomal protein uS3 family. In terms of assembly, part of the 30S ribosomal subunit. Forms a tight complex with proteins S10 and S14.

Its function is as follows. Binds the lower part of the 30S subunit head. Binds mRNA in the 70S ribosome, positioning it for translation. This chain is Small ribosomal subunit protein uS3, found in Alkalilimnicola ehrlichii (strain ATCC BAA-1101 / DSM 17681 / MLHE-1).